Here is a 274-residue protein sequence, read N- to C-terminus: HTH-type transcriptional regulator GadX (274 aa).

Residues 145–242 (TRVCTVINNN…GMTPTEYQER (98 aa)) enclose the HTH araC/xylS-type domain. DNA-binding regions (H-T-H motif) lie at residues 162 to 183 (ARIASELLMSPSLLKKKLREEG) and 209 to 232 (IKRVAVSCGYHSVSYFIYVFRNYY).

As to quaternary structure, homodimer.

Its function is as follows. Positively regulates the expression of about fifteen genes involved in acid resistance such as gadA, gadB and gadC. Depending on the conditions (growth phase and medium), can repress gadW. The chain is HTH-type transcriptional regulator GadX (gadX) from Escherichia coli O6:H1 (strain CFT073 / ATCC 700928 / UPEC).